Reading from the N-terminus, the 352-residue chain is NADP-dependent isopropanol dehydrogenase (352 aa).

Zn(2+)-binding residues include Cys37, His59, and Asp150. Residues 175–178, 198–200, Tyr218, 265–267, and Lys340 each bind NADP(+); these read IGPV, GSR, and VNY.

It belongs to the zinc-containing alcohol dehydrogenase family. As to quaternary structure, homotetramer. The cofactor is Zn(2+).

The enzyme catalyses propan-2-ol + NADP(+) = acetone + NADPH + H(+). Its function is as follows. Alcohol dehydrogenase with a preference for medium chain secondary alcohols, such as 2-butanol and isopropanol. Has very low activity with primary alcohols, such as ethanol. Under physiological conditions, the enzyme reduces aldehydes and 2-ketones to produce secondary alcohols. Is also active with acetaldehyde and propionaldehyde. The sequence is that of NADP-dependent isopropanol dehydrogenase (adh) from Thermoanaerobacter brockii (Thermoanaerobium brockii).